The following is a 124-amino-acid chain: Small ribosomal subunit protein bS6 (124 aa).

Residues 96-124 (ETGPSPMMKEVQREEAKKAAAAQPTEAQA) form a disordered region. Over residues 114–124 (AAAAQPTEAQA) the composition is skewed to low complexity.

Belongs to the bacterial ribosomal protein bS6 family.

Its function is as follows. Binds together with bS18 to 16S ribosomal RNA. This chain is Small ribosomal subunit protein bS6, found in Burkholderia vietnamiensis (strain G4 / LMG 22486) (Burkholderia cepacia (strain R1808)).